Here is a 157-residue protein sequence, read N- to C-terminus: Small ribosomal subunit protein uS7 (157 aa).

Belongs to the universal ribosomal protein uS7 family. As to quaternary structure, part of the 30S ribosomal subunit. Contacts proteins S9 and S11.

In terms of biological role, one of the primary rRNA binding proteins, it binds directly to 16S rRNA where it nucleates assembly of the head domain of the 30S subunit. Is located at the subunit interface close to the decoding center, probably blocks exit of the E-site tRNA. In Caulobacter vibrioides (strain ATCC 19089 / CIP 103742 / CB 15) (Caulobacter crescentus), this protein is Small ribosomal subunit protein uS7.